The sequence spans 398 residues: tRNA(Ile)-lysidine synthase (398 aa).

17–22 (SGGPDS) contributes to the ATP binding site.

It belongs to the tRNA(Ile)-lysidine synthase family.

The protein resides in the cytoplasm. It carries out the reaction cytidine(34) in tRNA(Ile2) + L-lysine + ATP = lysidine(34) in tRNA(Ile2) + AMP + diphosphate + H(+). Its function is as follows. Ligates lysine onto the cytidine present at position 34 of the AUA codon-specific tRNA(Ile) that contains the anticodon CAU, in an ATP-dependent manner. Cytidine is converted to lysidine, thus changing the amino acid specificity of the tRNA from methionine to isoleucine. The polypeptide is tRNA(Ile)-lysidine synthase (Mesoplasma florum (strain ATCC 33453 / NBRC 100688 / NCTC 11704 / L1) (Acholeplasma florum)).